The sequence spans 527 residues: Baeyer-Villiger monooxygenase (527 aa).

FAD is bound by residues Ser-36, Glu-56, 64–67 (TWRV), Asp-76, Tyr-82, and Ile-125. An NADP(+)-binding site is contributed by 74–76 (ACD). NADP(+) is bound by residues 199-205 (TGASAIQ), 222-223 (RT), and 308-309 (KR). Met-415 contributes to the FAD binding site.

This sequence belongs to the FAD-binding monooxygenase family. The cofactor is FAD.

In terms of biological role, catalyzes a Baeyer-Villiger oxidation reaction, i.e. the insertion of an oxygen atom into a carbon-carbon bond adjacent to a carbonyl, which converts ketones to esters or lactones using NADPH and/or NADH as an electron donor. Thus, can convert bicyclo[3.2.0]hept-2-en-6-one into the oxidative lactone products 2-oxabicyclo[3.3.0]oct-6-en-3-one and 3-oxabicyclo[3.3.0]oct-6-en-2-one. Is also able to catalyze the sulfoxidation of methyl phenyl sulfide (thioanisole). The chain is Baeyer-Villiger monooxygenase from Pseudomonas aeruginosa (strain ATCC 15692 / DSM 22644 / CIP 104116 / JCM 14847 / LMG 12228 / 1C / PRS 101 / PAO1).